Here is a 239-residue protein sequence, read N- to C-terminus: DNA repair protein RecO (239 aa).

This sequence belongs to the RecO family.

Its function is as follows. Involved in DNA repair and RecF pathway recombination. The chain is DNA repair protein RecO from Tolumonas auensis (strain DSM 9187 / NBRC 110442 / TA 4).